The primary structure comprises 135 residues: Protein NrdI (135 aa).

The protein belongs to the NrdI family.

Probably involved in ribonucleotide reductase function. This Brucella abortus (strain S19) protein is Protein NrdI.